The following is a 227-amino-acid chain: Uracil-DNA glycosylase (227 aa).

Catalysis depends on Asp-65, which acts as the Proton acceptor.

Belongs to the uracil-DNA glycosylase (UDG) superfamily. UNG family.

The protein localises to the cytoplasm. It catalyses the reaction Hydrolyzes single-stranded DNA or mismatched double-stranded DNA and polynucleotides, releasing free uracil.. Its function is as follows. Excises uracil residues from the DNA which can arise as a result of misincorporation of dUMP residues by DNA polymerase or due to deamination of cytosine. This Lactobacillus delbrueckii subsp. bulgaricus (strain ATCC BAA-365 / Lb-18) protein is Uracil-DNA glycosylase.